The sequence spans 386 residues: MHLHEYQAKDLLTSYQLPIPPYHVATSLSEAEVAIQAEQWRSGVVKAQVHAGGRGKNGGVIVARSPEDLLAATDRLLHMQFSSNQTAGLSLPVNKVLISPLVEIALEYYIAIVIDRKHRCPVIMLSKSGGIDIEEIAEKQPDLLLKIALPSSGKIYAYQLRHIAKFMEWDKLVADRGNHIIRKLLQCFYDNDASLLEINPLVLTKDGDLIILDAKITIDDNALYRHPQLADWYDPSQENIRDVLAKQLGLSYIALDGTIGCLVNGAGLAMSTLDILKLYGGSAANFLDVGGSASEKQIQEAISLVLSDKNVRVLFIHIFGGIMDCAVVASGLVSAMQGQQGSIPTVIRLEGTNVDKGKEIILRSGIPCEFVASMSEGAELAVKLSR.

An ATP-grasp domain is found at 9-244; it reads KDLLTSYQLP…PSQENIRDVL (236 aa). ATP-binding positions include lysine 46, 53-55, valine 102, and glutamate 107; that span reads GRG. The Mg(2+) site is built by asparagine 199 and aspartate 213. Residues asparagine 264 and 321 to 323 each bind substrate; that span reads GIM.

The protein belongs to the succinate/malate CoA ligase beta subunit family. Heterotetramer of two alpha and two beta subunits. Mg(2+) is required as a cofactor.

It carries out the reaction succinate + ATP + CoA = succinyl-CoA + ADP + phosphate. It catalyses the reaction GTP + succinate + CoA = succinyl-CoA + GDP + phosphate. The protein operates within carbohydrate metabolism; tricarboxylic acid cycle; succinate from succinyl-CoA (ligase route): step 1/1. In terms of biological role, succinyl-CoA synthetase functions in the citric acid cycle (TCA), coupling the hydrolysis of succinyl-CoA to the synthesis of either ATP or GTP and thus represents the only step of substrate-level phosphorylation in the TCA. The beta subunit provides nucleotide specificity of the enzyme and binds the substrate succinate, while the binding sites for coenzyme A and phosphate are found in the alpha subunit. The protein is Succinate--CoA ligase [ADP-forming] subunit beta of Chlamydia muridarum (strain MoPn / Nigg).